A 93-amino-acid polypeptide reads, in one-letter code: Pyrimidine/purine nucleoside phosphorylase (93 aa).

Belongs to the nucleoside phosphorylase PpnP family.

The catalysed reaction is a purine D-ribonucleoside + phosphate = a purine nucleobase + alpha-D-ribose 1-phosphate. The enzyme catalyses adenosine + phosphate = alpha-D-ribose 1-phosphate + adenine. It catalyses the reaction cytidine + phosphate = cytosine + alpha-D-ribose 1-phosphate. It carries out the reaction guanosine + phosphate = alpha-D-ribose 1-phosphate + guanine. The catalysed reaction is inosine + phosphate = alpha-D-ribose 1-phosphate + hypoxanthine. The enzyme catalyses thymidine + phosphate = 2-deoxy-alpha-D-ribose 1-phosphate + thymine. It catalyses the reaction uridine + phosphate = alpha-D-ribose 1-phosphate + uracil. It carries out the reaction xanthosine + phosphate = alpha-D-ribose 1-phosphate + xanthine. In terms of biological role, catalyzes the phosphorolysis of diverse nucleosides, yielding D-ribose 1-phosphate and the respective free bases. Can use uridine, adenosine, guanosine, cytidine, thymidine, inosine and xanthosine as substrates. Also catalyzes the reverse reactions. The polypeptide is Pyrimidine/purine nucleoside phosphorylase (Aliivibrio fischeri (strain ATCC 700601 / ES114) (Vibrio fischeri)).